The following is a 418-amino-acid chain: MAPPQGSRAPLEFGGPLGAAALMLLLPVTMFHLLLVARSGPARLLGPPPYLPGPEELWSPWALLLCLTWLGLQAALYLLPARKVAEGQELKDKSRLRYPTNGFQALVLTALLVGLGVSAGLPLSALPEMLLPLAFAATLTAFIFSLLLYLKALLAPASALAPGGNSGNLIYDFFLGRELNPRICSFDFKYFCELRPGLIGWVLINLALLIQEAELRGSPSLAMWLVNGFQLLYVGDALWYEEAVLTTMDIIHDGFGFMLAFGDLAWVPFTYSLQAQFLLYHPQPLGWPLASFICLINAVGYYIFRGANSQKNTFRKNPSDPRVADLETISTATGRRLLVSGWWGMVRHPNYLGDLIMALAWSLPCGVFHLLPYFYFLYFTALLVHREDRDERQCRQKYGLAWHEYCRRVPYRIVPYVY.

Helical transmembrane passes span F13 to L35, A62 to A81, G102 to S124, M129 to L148, F255 to F277, and W287 to F304. NADP(+)-binding positions include K311, R315, L338, W343, and N350–Y351. The chain crosses the membrane as a helical span at residues L355 to L377. NADP(+)-binding positions include D390, C394–Y398, and Y405.

This sequence belongs to the ERG4/ERG24 family. In terms of tissue distribution, highly expressed in liver and brain.

It is found in the microsome membrane. It localises to the endoplasmic reticulum membrane. It carries out the reaction 4,4-dimethyl-5alpha-cholesta-8,24-dien-3beta-ol + NADP(+) = 4,4-dimethyl-5alpha-cholesta-8,14,24-trien-3beta-ol + NADPH + H(+). The catalysed reaction is 5alpha-cholest-8,14-dien-3beta-ol + NADPH + H(+) = 5alpha-cholest-8-en-3beta-ol + NADP(+). It catalyses the reaction 4,4-dimethyl-8,14-cholestadien-3beta-ol + NADPH + H(+) = 4,4-dimethyl-5alpha-cholest-8-en-3beta-ol + NADP(+). Its pathway is steroid biosynthesis; cholesterol biosynthesis. Its function is as follows. Catalyzes the reduction of the C14-unsaturated bond of lanosterol, as part of the metabolic pathway leading to cholesterol biosynthesis. In Bos taurus (Bovine), this protein is Delta(14)-sterol reductase TM7SF2 (TM7SF2).